A 338-amino-acid polypeptide reads, in one-letter code: Photosystem II assembly lipoprotein Ycf48 (338 aa).

The N-terminal stretch at 1 to 23 is a signal peptide; sequence MKKIITSFPNLLLSILLCFVLSS. C24 carries N-palmitoyl cysteine lipidation. Residue C24 is the site of S-diacylglycerol cysteine attachment.

This sequence belongs to the Ycf48 family. In terms of assembly, part of early PSII assembly complexes which includes D1 (psbA) and PsbI; not found in mature PSII. Binds to the lumenal side of PSII complexes. Interacts with YidC.

Its subcellular location is the cellular thylakoid membrane. A factor required for optimal assembly of photosystem II (PSII), acting in the early stages of PSII assembly. Also plays a role in replacement of photodamaged D1 (psbA). Assists YidC in synthesis of chlorophyll-binding proteins. This chain is Photosystem II assembly lipoprotein Ycf48, found in Prochlorococcus marinus (strain MIT 9312).